The chain runs to 545 residues: Thermosome subunit beta (545 aa).

This sequence belongs to the TCP-1 chaperonin family. Forms a Heterooligomeric complex of two stacked eight-membered rings.

Its function is as follows. Molecular chaperone; binds unfolded polypeptides in vitro, and has a weak ATPase activity. The protein is Thermosome subunit beta (thsB) of Archaeoglobus fulgidus (strain ATCC 49558 / DSM 4304 / JCM 9628 / NBRC 100126 / VC-16).